The chain runs to 151 residues: Ribonuclease H (151 aa).

Residues 1–146 form the RNase H type-1 domain; the sequence is MSDLFAYTDG…ADELARAGMA (146 aa). 4 residues coordinate Mg(2+): aspartate 9, glutamate 52, aspartate 74, and aspartate 138.

The protein belongs to the RNase H family. Monomer. It depends on Mg(2+) as a cofactor.

The protein localises to the cytoplasm. The catalysed reaction is Endonucleolytic cleavage to 5'-phosphomonoester.. Its function is as follows. Endonuclease that specifically degrades the RNA of RNA-DNA hybrids. The polypeptide is Ribonuclease H (Cereibacter sphaeroides (strain ATCC 17025 / ATH 2.4.3) (Rhodobacter sphaeroides)).